Reading from the N-terminus, the 229-residue chain is Heptaprenylglyceryl phosphate synthase (229 aa).

The Mg(2+) site is built by Asp-13 and Thr-39.

This sequence belongs to the GGGP/HepGP synthase family. As to quaternary structure, homodimer. Mg(2+) serves as cofactor.

The enzyme catalyses sn-glycerol 1-phosphate + all-trans-heptaprenyl diphosphate = 3-heptaprenyl-sn-glycero-1-phosphate + diphosphate. The protein operates within membrane lipid metabolism; glycerophospholipid metabolism. Prenyltransferase that catalyzes in vivo the transfer of the heptaprenyl moiety of heptaprenyl pyrophosphate (HepPP; 35 carbon atoms) to the C3 hydroxyl of sn-glycerol-1-phosphate (G1P), producing heptaprenylglyceryl phosphate (HepGP). This reaction is an ether-bond-formation step in the biosynthesis of archaea-type G1P-based membrane lipids found in Bacillales. This is Heptaprenylglyceryl phosphate synthase from Lysinibacillus sphaericus (strain C3-41).